We begin with the raw amino-acid sequence, 466 residues long: 3-isopropylmalate dehydratase large subunit (466 aa).

Residues Cys-347, Cys-407, and Cys-410 each contribute to the [4Fe-4S] cluster site.

It belongs to the aconitase/IPM isomerase family. LeuC type 1 subfamily. In terms of assembly, heterodimer of LeuC and LeuD. Requires [4Fe-4S] cluster as cofactor.

The catalysed reaction is (2R,3S)-3-isopropylmalate = (2S)-2-isopropylmalate. The protein operates within amino-acid biosynthesis; L-leucine biosynthesis; L-leucine from 3-methyl-2-oxobutanoate: step 2/4. Catalyzes the isomerization between 2-isopropylmalate and 3-isopropylmalate, via the formation of 2-isopropylmaleate. In Enterobacter sp. (strain 638), this protein is 3-isopropylmalate dehydratase large subunit.